Reading from the N-terminus, the 776-residue chain is Endonuclease MutS2 (776 aa).

Residue 330 to 337 (GPNTGGKT) participates in ATP binding. The Smr domain occupies 701 to 776 (LDLRGMRYEE…GSGATIAILK (76 aa)).

It belongs to the DNA mismatch repair MutS family. MutS2 subfamily. Homodimer. Binds to stalled ribosomes, contacting rRNA.

Its function is as follows. Endonuclease that is involved in the suppression of homologous recombination and thus may have a key role in the control of bacterial genetic diversity. Acts as a ribosome collision sensor, splitting the ribosome into its 2 subunits. Detects stalled/collided 70S ribosomes which it binds and splits by an ATP-hydrolysis driven conformational change. Acts upstream of the ribosome quality control system (RQC), a ribosome-associated complex that mediates the extraction of incompletely synthesized nascent chains from stalled ribosomes and their subsequent degradation. Probably generates substrates for RQC. The polypeptide is Endonuclease MutS2 (Lactococcus lactis subsp. cremoris (strain SK11)).